Here is a 396-residue protein sequence, read N- to C-terminus: Phosphoglycerate kinase (396 aa).

Residues 21 to 23 (DFN), arginine 36, 59 to 62 (HLGK), arginine 119, and arginine 156 each bind substrate. Residues lysine 206, glycine 294, glutamate 325, and 352–355 (GGDS) each bind ATP.

Belongs to the phosphoglycerate kinase family. As to quaternary structure, monomer.

Its subcellular location is the cytoplasm. It carries out the reaction (2R)-3-phosphoglycerate + ATP = (2R)-3-phospho-glyceroyl phosphate + ADP. It functions in the pathway carbohydrate degradation; glycolysis; pyruvate from D-glyceraldehyde 3-phosphate: step 2/5. The protein is Phosphoglycerate kinase of Listeria monocytogenes serotype 4a (strain HCC23).